A 264-amino-acid chain; its full sequence is Small ribosomal subunit protein uS2 (264 aa).

Belongs to the universal ribosomal protein uS2 family.

In Helicobacter pylori (strain ATCC 700392 / 26695) (Campylobacter pylori), this protein is Small ribosomal subunit protein uS2 (rpsB).